Consider the following 488-residue polypeptide: GTPase Der (488 aa).

EngA-type G domains follow at residues 3–166 (PVVA…AEAM) and 199–372 (IKLA…DSAT). GTP-binding positions include 9 to 16 (GRPNVGKS), 56 to 60 (DTGGI), 118 to 121 (NKVD), 205 to 212 (GKPNVGKS), 252 to 256 (DTAGV), and 317 to 320 (NKWD). The KH-like domain maps to 373–457 (RRVSTSMLTR…PIQLRFQEGD (85 aa)). The tract at residues 460 to 488 (FENKTEKLTMSQERRRKRAQSHIKDRKTK) is disordered. Residues 473-488 (RRRKRAQSHIKDRKTK) are compositionally biased toward basic residues.

Belongs to the TRAFAC class TrmE-Era-EngA-EngB-Septin-like GTPase superfamily. EngA (Der) GTPase family. As to quaternary structure, associates with the 50S ribosomal subunit.

In terms of biological role, GTPase that plays an essential role in the late steps of ribosome biogenesis. The polypeptide is GTPase Der (Shewanella baltica (strain OS155 / ATCC BAA-1091)).